The sequence spans 365 residues: DNA replication and repair protein RecF (365 aa).

30–37 (GLNAQGKT) is a binding site for ATP.

This sequence belongs to the RecF family.

The protein localises to the cytoplasm. In terms of biological role, the RecF protein is involved in DNA metabolism; it is required for DNA replication and normal SOS inducibility. RecF binds preferentially to single-stranded, linear DNA. It also seems to bind ATP. The polypeptide is DNA replication and repair protein RecF (Chlamydia trachomatis serovar A (strain ATCC VR-571B / DSM 19440 / HAR-13)).